We begin with the raw amino-acid sequence, 346 residues long: Cyclin-dependent kinase 20 (346 aa).

In terms of domain architecture, Protein kinase spans 4-288; sequence YCILGRIGEG…ASQALLHQYF (285 aa). ATP is bound by residues 10–18 and Lys-33; that span reads IGEGAHGIV. Residue Asp-127 is the Proton acceptor of the active site. Residues 298-324 are disordered; the sequence is SELPIPQRPGGPTPKAHPGPPHVHDFH. Over residues 303–318 the composition is skewed to pro residues; sequence PQRPGGPTPKAHPGPP.

Belongs to the protein kinase superfamily. CMGC Ser/Thr protein kinase family. CDC2/CDKX subfamily. As to quaternary structure, monomer. Interacts with TBC1D32 and MAK.

It is found in the nucleus. The protein resides in the cytoplasm. Its subcellular location is the cell projection. It localises to the cilium. It catalyses the reaction L-seryl-[protein] + ATP = O-phospho-L-seryl-[protein] + ADP + H(+). The catalysed reaction is L-threonyl-[protein] + ATP = O-phospho-L-threonyl-[protein] + ADP + H(+). Required for high-level Shh responses in the developing neural tube. Together with TBC1D32, controls the structure of the primary cilium by coordinating assembly of the ciliary membrane and axoneme, allowing GLI2 to be properly activated in response to SHH signaling. Involved in cell growth. Activates CDK2, a kinase involved in the control of the cell cycle, by phosphorylating residue 'Thr-160'. The polypeptide is Cyclin-dependent kinase 20 (Cdk20) (Rattus norvegicus (Rat)).